Consider the following 365-residue polypeptide: P43 5S RNA-binding protein (365 aa).

C2H2-type zinc fingers lie at residues 15 to 39 (LRCP…MAGH), 45 to 69 (WKCG…VKRH), 75 to 100 (LSCP…LYKH), 106 to 130 (LKCF…LSVH), 136 to 160 (SVCD…QKRH), 163 to 187 (YRCS…VKKH), 191 to 213 (LQCA…KATH), 220 to 245 (LPCP…RKLH), and 251 to 275 (HRCP…LVVH).

In terms of assembly, the 42S RNP particle comprises four subunits each of which contains one molecule of 5S RNA, three molecules of tRNA, two molecules of p50 (EF1-alpha) and one molecule of the 5S RNA binding protein 43.

In terms of biological role, p43 is a 5S RNA binding protein which is a major constituent of oocytes and comprises part of a 42S ribonucleoprotein storage particle. The sequence is that of P43 5S RNA-binding protein from Xenopus laevis (African clawed frog).